The following is a 509-amino-acid chain: Tyrosine-protein kinase STK (509 aa).

The span at 1 to 16 shows a compositional bias: polar residues; sequence MGPCCSKQTKALNNQP. The segment at 1–23 is disordered; it reads MGPCCSKQTKALNNQPDKSKSKD. Gly2 is lipidated: N-myristoyl glycine. The 62-residue stretch at 59-120 folds into the SH3 domain; that stretch reads PGVTIFVALY…PSTYVAPEKS (62 aa). The SH2 domain maps to 126 to 218; sequence WYFGDVKRAE…GLVCALTLPC (93 aa). The Protein kinase domain occupies 240–495; that stretch reads LRLNRKLGAG…LQGVLEDYFV (256 aa). ATP-binding positions include 246 to 254 and Lys268; that span reads LGAGQFGEV. Asp360 (proton acceptor) is an active-site residue. Tyr390 carries the phosphotyrosine; by autocatalysis modification.

The protein belongs to the protein kinase superfamily. Tyr protein kinase family. SRC subfamily.

The catalysed reaction is L-tyrosyl-[protein] + ATP = O-phospho-L-tyrosyl-[protein] + ADP + H(+). This chain is Tyrosine-protein kinase STK (STK), found in Hydra vulgaris (Hydra).